Here is a 517-residue protein sequence, read N- to C-terminus: DNA-binding protein (517 aa).

Residues 1–10 are compositionally biased toward polar residues; the sequence is MASRGGNQSS. Positions 1–110 are disordered; sequence MASRGGNQSS…DISQDSEEER (110 aa). Low complexity predominate over residues 64-80; the sequence is VLVSETSRSSLSPERSN. Over residues 87 to 96 the composition is skewed to basic residues; that stretch reads PKKKPRKTKH. Y180 is modified (phosphotyrosine; by host). Zn(2+) is bound by residues C269 and H271. The segment at 282-316 is flexible loop; the sequence is IEMDVASENGQRAMKENPDRAKITQNRWGRNVVQL. Residues C324, C340, C382, C384, C436, and C453 each contribute to the Zn(2+) site. The tract at residues 501 to 517 is C-terminal arm, DBP binding; the sequence is VSLPAGHYDSRQNPFDF.

The protein belongs to the adenoviridae E2A DNA-binding protein family. Homomultimerizes on viral ssDNA bound to pTP. Forms a initiation complex with viral polymerase, pTP and hosts NFIA and POU2F1/OCT1. Interacts with host SRCAP.

It localises to the host nucleus. Its function is as follows. Plays a role in the elongation phase of viral strand displacement replication by unwinding the template in an ATP-independent fashion, employing its capacity to form multimers. Also enhances the rate of initiation. Released from template upon second strand synthesis. Assembles in complex with viral pTP, viral pol, host NFIA and host POU2F1/OCT1 on viral origin of replication. Covers the whole ssDNA genome during synthesis. The complementary strand synthesis induces its relese from DNA template. May inhibit cellular transcription mediated by the interaction between host SRCAP and CBP. The sequence is that of DNA-binding protein from Human adenovirus B serotype 7 (HAdV-7).